We begin with the raw amino-acid sequence, 241 residues long: Probable transcriptional regulatory protein RSc2190 (241 aa).

Belongs to the TACO1 family.

The protein resides in the cytoplasm. In Ralstonia nicotianae (strain ATCC BAA-1114 / GMI1000) (Ralstonia solanacearum), this protein is Probable transcriptional regulatory protein RSc2190.